Reading from the N-terminus, the 157-residue chain is Phosphopantetheine adenylyltransferase (157 aa).

Belongs to the eukaryotic CoaD family. In terms of assembly, monomer.

It is found in the cytoplasm. It catalyses the reaction (R)-4'-phosphopantetheine + ATP + H(+) = 3'-dephospho-CoA + diphosphate. The protein operates within cofactor biosynthesis; coenzyme A biosynthesis. Its function is as follows. Reversibly transfers an adenylyl group from ATP to 4'-phosphopantetheine, yielding dephospho-CoA (dPCoA) and pyrophosphate. The chain is Phosphopantetheine adenylyltransferase from Pyrococcus abyssi (strain GE5 / Orsay).